Here is a 222-residue protein sequence, read N- to C-terminus: Flagellar L-ring protein (222 aa).

An N-terminal signal peptide occupies residues Met1 to Gly18. Cys19 is lipidated: N-palmitoyl cysteine. A lipid anchor (S-diacylglycerol cysteine) is attached at Cys19.

This sequence belongs to the FlgH family. As to quaternary structure, the basal body constitutes a major portion of the flagellar organelle and consists of four rings (L,P,S, and M) mounted on a central rod.

It localises to the cell outer membrane. The protein localises to the bacterial flagellum basal body. Assembles around the rod to form the L-ring and probably protects the motor/basal body from shearing forces during rotation. This Burkholderia mallei (strain ATCC 23344) protein is Flagellar L-ring protein.